The sequence spans 87 residues: MNSKVFVVLLLLALSTCVLSEKYCPTPRNTSCKKMNIRNNCCRDSDCTSNAFCCAEPCGNFCHKASDKPGGRRVDPNASCKTGYVYW.

The signal sequence occupies residues 1-20; that stretch reads MNSKVFVVLLLLALSTCVLS. Residues 21 to 66 form the WAP domain; sequence EKYCPTPRNTSCKKMNIRNNCCRDSDCTSNAFCCAEPCGNFCHKAS. Intrachain disulfides connect cysteine 24–cysteine 54, cysteine 32–cysteine 58, cysteine 41–cysteine 53, cysteine 42–cysteine 80, and cysteine 47–cysteine 62.

The protein belongs to the venom protein 11 family. 01 (wap-1) subfamily. Post-translationally, contains 5 disulfide bonds. As to expression, expressed by the venom gland.

Its subcellular location is the secreted. Has antibacterial activity. This is U14-lycotoxin-Ls1b from Lycosa singoriensis (Wolf spider).